Reading from the N-terminus, the 122-residue chain is Small ribosomal subunit protein bS16 (122 aa).

This sequence belongs to the bacterial ribosomal protein bS16 family.

This Prochlorococcus marinus (strain MIT 9313) protein is Small ribosomal subunit protein bS16.